Reading from the N-terminus, the 476-residue chain is Cobyric acid synthase (476 aa).

Positions 242 to 428 (AFRVVVPVPP…LHGLFDTPDA (187 aa)) constitute a GATase cobBQ-type domain. The active-site Nucleophile is C323. H420 is an active-site residue.

Belongs to the CobB/CobQ family. CobQ subfamily.

The protein operates within cofactor biosynthesis; adenosylcobalamin biosynthesis. In terms of biological role, catalyzes amidations at positions B, D, E, and G on adenosylcobyrinic A,C-diamide. NH(2) groups are provided by glutamine, and one molecule of ATP is hydrogenolyzed for each amidation. The polypeptide is Cobyric acid synthase (Janthinobacterium sp. (strain Marseille) (Minibacterium massiliensis)).